Here is a 60-residue protein sequence, read N- to C-terminus: Toxin FS-2 (60 aa).

4 disulfides stabilise this stretch: C3-C22, C17-C39, C41-C52, and C53-C58. Residues 41–48 form an important for binding to L-type calcium channels region; it reads CPTAMWPY.

It belongs to the three-finger toxin family. Short-chain subfamily. L-type calcium blocker sub-subfamily. Expressed by the venom gland.

Its subcellular location is the secreted. Its function is as follows. Specific blocker of the voltage-dependent L-type calcium channel (Cav1/CACNA1). Inhibits cardiac contractions. This Dendroaspis polylepis polylepis (Black mamba) protein is Toxin FS-2.